A 168-amino-acid polypeptide reads, in one-letter code: Photosystem I assembly protein Ycf3 (168 aa).

TPR repeat units follow at residues 35 to 68 (AFTYYRDGMSAQSEGNYAEALQNYYEAMRLEIDP), 72 to 105 (SYILYNIGLIHTSNGEHTKALEYYFRALERNPFL), and 120 to 153 (GEQAIRQGDSEIAEAWFDQAAEYWKQAIALTPGN).

Belongs to the Ycf3 family.

It localises to the plastid. The protein resides in the chloroplast thylakoid membrane. Essential for the assembly of the photosystem I (PSI) complex. May act as a chaperone-like factor to guide the assembly of the PSI subunits. The protein is Photosystem I assembly protein Ycf3 of Populus alba (White poplar).